The primary structure comprises 1055 residues: Cell-division control histidine kinase PdhS (1055 aa).

The important for polar localization stretch occupies residues 1 to 626 (MSGSYPFIDI…RANGSEEPVD (626 aa)). Positions 419–439 (DDSPVATLPKPPLDIAPTPGR) are disordered. An interaction with DivK region spans residues 627-1055 (AHLNAISWRE…AFPPTRVLAD (429 aa)). A PAS domain is found at 679–750 (HVEELKTILD…YLHGLSGNGV (72 aa)). Positions 822–1051 (RISHEIRTPL…VVEIAFPPTR (230 aa)) constitute a Histidine kinase domain. Histidine 825 bears the Phosphohistidine; by autocatalysis mark.

Interacts with DivK.

It is found in the cytoplasm. It carries out the reaction ATP + protein L-histidine = ADP + protein N-phospho-L-histidine.. Its function is as follows. Functions as a polar differentiation marker. Essential protein that, by localizing in the old pole of dividing cells, controls cell division and maturation, probably through control of DivK phosphorylation status and cellular distribution, which in turn regulates CtrA, a transcriptional regulator of the minB operon. The asymmetrical localization of this protein is probably required for cells to enter a new division cycle. In Brucella anthropi (strain ATCC 49188 / DSM 6882 / CCUG 24695 / JCM 21032 / LMG 3331 / NBRC 15819 / NCTC 12168 / Alc 37) (Ochrobactrum anthropi), this protein is Cell-division control histidine kinase PdhS (pdhS).